A 312-amino-acid polypeptide reads, in one-letter code: Ribonuclease Z (312 aa).

Zn(2+)-binding residues include His63, His65, Asp67, His68, His141, Asp212, and His270. The Proton acceptor role is filled by Asp67.

It belongs to the RNase Z family. As to quaternary structure, homodimer. Zn(2+) serves as cofactor.

It carries out the reaction Endonucleolytic cleavage of RNA, removing extra 3' nucleotides from tRNA precursor, generating 3' termini of tRNAs. A 3'-hydroxy group is left at the tRNA terminus and a 5'-phosphoryl group is left at the trailer molecule.. Zinc phosphodiesterase, which displays some tRNA 3'-processing endonuclease activity. Probably involved in tRNA maturation, by removing a 3'-trailer from precursor tRNA. This is Ribonuclease Z from Latilactobacillus sakei subsp. sakei (strain 23K) (Lactobacillus sakei subsp. sakei).